Consider the following 355-residue polypeptide: 3-isopropylmalate dehydrogenase (355 aa).

Substrate-binding residues include R90, R100, R128, and D222. The Mg(2+) site is built by D222, D246, and D250. 280-292 (GSAPDIAGKGVAN) provides a ligand contact to NAD(+).

It belongs to the isocitrate and isopropylmalate dehydrogenases family. LeuB type 1 subfamily. In terms of assembly, homodimer. The cofactor is Mg(2+). Mn(2+) serves as cofactor.

Its subcellular location is the cytoplasm. It carries out the reaction (2R,3S)-3-isopropylmalate + NAD(+) = 4-methyl-2-oxopentanoate + CO2 + NADH. The protein operates within amino-acid biosynthesis; L-leucine biosynthesis; L-leucine from 3-methyl-2-oxobutanoate: step 3/4. Its function is as follows. Catalyzes the oxidation of 3-carboxy-2-hydroxy-4-methylpentanoate (3-isopropylmalate) to 3-carboxy-4-methyl-2-oxopentanoate. The product decarboxylates to 4-methyl-2 oxopentanoate. This Cupriavidus metallidurans (strain ATCC 43123 / DSM 2839 / NBRC 102507 / CH34) (Ralstonia metallidurans) protein is 3-isopropylmalate dehydrogenase.